Here is a 1407-residue protein sequence, read N- to C-terminus: DNA-directed RNA polymerase subunit beta' (1407 aa).

Zn(2+)-binding residues include C70, C72, C85, and C88. Mg(2+) is bound by residues D460, D462, and D464. Positions 814, 888, 895, and 898 each coordinate Zn(2+).

Belongs to the RNA polymerase beta' chain family. The RNAP catalytic core consists of 2 alpha, 1 beta, 1 beta' and 1 omega subunit. When a sigma factor is associated with the core the holoenzyme is formed, which can initiate transcription. Requires Mg(2+) as cofactor. Zn(2+) is required as a cofactor.

The catalysed reaction is RNA(n) + a ribonucleoside 5'-triphosphate = RNA(n+1) + diphosphate. DNA-dependent RNA polymerase catalyzes the transcription of DNA into RNA using the four ribonucleoside triphosphates as substrates. This chain is DNA-directed RNA polymerase subunit beta', found in Citrobacter koseri (strain ATCC BAA-895 / CDC 4225-83 / SGSC4696).